We begin with the raw amino-acid sequence, 561 residues long: NADH-quinone oxidoreductase subunit C/D (561 aa).

The interval M1–L152 is NADH dehydrogenase I subunit C. Positions K176–R561 are NADH dehydrogenase I subunit D.

In the N-terminal section; belongs to the complex I 30 kDa subunit family. It in the C-terminal section; belongs to the complex I 49 kDa subunit family. In terms of assembly, NDH-1 is composed of 13 different subunits. Subunits NuoB, CD, E, F, and G constitute the peripheral sector of the complex.

The protein resides in the cell inner membrane. It catalyses the reaction a quinone + NADH + 5 H(+)(in) = a quinol + NAD(+) + 4 H(+)(out). NDH-1 shuttles electrons from NADH, via FMN and iron-sulfur (Fe-S) centers, to quinones in the respiratory chain. The immediate electron acceptor for the enzyme in this species is believed to be ubiquinone. Couples the redox reaction to proton translocation (for every two electrons transferred, four hydrogen ions are translocated across the cytoplasmic membrane), and thus conserves the redox energy in a proton gradient. The protein is NADH-quinone oxidoreductase subunit C/D of Campylobacter fetus subsp. fetus (strain 82-40).